The chain runs to 347 residues: Histone deacetylase 11 (347 aa).

The segment at 14–326 is histone deacetylase; it reads TRWPIVYSPR…LNLFGLGLIG (313 aa). H143 is a catalytic residue.

It belongs to the histone deacetylase family. Interacts with HDAC6. Weakly expressed in most tissues. Strongly expressed in brain, heart, skeletal muscle, kidney and testis.

The protein localises to the nucleus. The catalysed reaction is N(6)-acetyl-L-lysyl-[histone] + H2O = L-lysyl-[histone] + acetate. Responsible for the deacetylation of lysine residues on the N-terminal part of the core histones (H2A, H2B, H3 and H4). Histone deacetylation gives a tag for epigenetic repression and plays an important role in transcriptional regulation, cell cycle progression and developmental events. Histone deacetylases act via the formation of large multiprotein complexes. In Homo sapiens (Human), this protein is Histone deacetylase 11 (HDAC11).